A 162-amino-acid chain; its full sequence is Transcription elongation factor GreA (162 aa).

Residues 45–74 (ENAEYEAAREKQAFIEGRIKELEDMTARAE) adopt a coiled-coil conformation.

It belongs to the GreA/GreB family.

Functionally, necessary for efficient RNA polymerase transcription elongation past template-encoded arresting sites. The arresting sites in DNA have the property of trapping a certain fraction of elongating RNA polymerases that pass through, resulting in locked ternary complexes. Cleavage of the nascent transcript by cleavage factors such as GreA or GreB allows the resumption of elongation from the new 3'terminus. GreA releases sequences of 2 to 3 nucleotides. This is Transcription elongation factor GreA from Rickettsia typhi (strain ATCC VR-144 / Wilmington).